The following is a 141-amino-acid chain: Large ribosomal subunit protein uL11 (141 aa).

This sequence belongs to the universal ribosomal protein uL11 family. In terms of assembly, part of the ribosomal stalk of the 50S ribosomal subunit. Interacts with L10 and the large rRNA to form the base of the stalk. L10 forms an elongated spine to which L12 dimers bind in a sequential fashion forming a multimeric L10(L12)X complex. Post-translationally, one or more lysine residues are methylated.

Functionally, forms part of the ribosomal stalk which helps the ribosome interact with GTP-bound translation factors. This chain is Large ribosomal subunit protein uL11, found in Thermomicrobium roseum (strain ATCC 27502 / DSM 5159 / P-2).